The primary structure comprises 213 residues: Glycerol-3-phosphate acyltransferase (213 aa).

Helical transmembrane passes span 3-23, 68-88, 112-132, 134-154, and 163-183; these read LLLF…LWIG, ILLP…GFFA, VLLG…VLVL, LFSM…LSVL, and LPNY…IIII.

This sequence belongs to the PlsY family. In terms of assembly, probably interacts with PlsX.

The protein resides in the cell membrane. It carries out the reaction an acyl phosphate + sn-glycerol 3-phosphate = a 1-acyl-sn-glycero-3-phosphate + phosphate. Its pathway is lipid metabolism; phospholipid metabolism. Functionally, catalyzes the transfer of an acyl group from acyl-phosphate (acyl-PO(4)) to glycerol-3-phosphate (G3P) to form lysophosphatidic acid (LPA). This enzyme utilizes acyl-phosphate as fatty acyl donor, but not acyl-CoA or acyl-ACP. The chain is Glycerol-3-phosphate acyltransferase from Streptococcus pyogenes serotype M28 (strain MGAS6180).